The sequence spans 141 residues: Putative pre-16S rRNA nuclease (141 aa).

This sequence belongs to the YqgF nuclease family.

Its subcellular location is the cytoplasm. Its function is as follows. Could be a nuclease involved in processing of the 5'-end of pre-16S rRNA. The protein is Putative pre-16S rRNA nuclease of Cupriavidus necator (strain ATCC 17699 / DSM 428 / KCTC 22496 / NCIMB 10442 / H16 / Stanier 337) (Ralstonia eutropha).